Reading from the N-terminus, the 208-residue chain is Fibroblast growth factor 6 (208 aa).

A signal peptide spans methionine 1–proline 37. Asparagine 45 is a glycosylation site (N-linked (GlcNAc...) asparagine). Cysteines 90 and 157 form a disulfide.

Belongs to the heparin-binding growth factors family. In terms of assembly, interacts with FGFR1, FGFR2 and FGFR4. Affinity between fibroblast growth factors (FGFs) and their receptors is increased by heparan sulfate glycosaminoglycans that function as coreceptors. As to expression, embryos, adult muscles and adult testis.

The protein resides in the secreted. Its subcellular location is the extracellular space. Plays an important role in the regulation of cell proliferation, cell differentiation, angiogenesis and myogenesis, and is required for normal muscle regeneration. This is Fibroblast growth factor 6 (Fgf6) from Mus musculus (Mouse).